The chain runs to 185 residues: Elongation factor P (185 aa).

It belongs to the elongation factor P family.

Its subcellular location is the cytoplasm. Its pathway is protein biosynthesis; polypeptide chain elongation. Involved in peptide bond synthesis. Stimulates efficient translation and peptide-bond synthesis on native or reconstituted 70S ribosomes in vitro. Probably functions indirectly by altering the affinity of the ribosome for aminoacyl-tRNA, thus increasing their reactivity as acceptors for peptidyl transferase. The chain is Elongation factor P from Mesomycoplasma hyopneumoniae (strain 7448) (Mycoplasma hyopneumoniae).